Reading from the N-terminus, the 705-residue chain is Dolichyl-diphosphooligosaccharide--protein glycosyltransferase subunit STT3A (705 aa).

Topologically, residues 1–15 are cytoplasmic; it reads MTKLGFLRLSYEKQD. The helical transmembrane segment at 16-34 threads the bilayer; it reads TLLKLLILSMAAVLSFSTR. The Lumenal portion of the chain corresponds to 35-111; it reads LFAVLRFESV…VLHFFHITID (77 aa). Residues 47-49 carry the DXD motif 1 motif; sequence EFD. Asp-49 serves as a coordination point for Mn(2+). A helical transmembrane segment spans residues 112–141; that stretch reads IRNVCVFLAPLFSSFTTIVTYHLTKELKDA. Gly-142 is a topological domain (cytoplasmic). The helical transmembrane segment at 143-158 threads the bilayer; it reads AGLLAAAMIAVVPGYI. Over 159-170 the chain is Lumenal; the sequence is SRSVAGSYDNEG. Residues Asp-167 and Glu-169 each coordinate Mn(2+). The DXD motif 2 signature appears at 167-169; sequence DNE. A helical transmembrane segment spans residues 171-188; sequence IAIFCMLLTYYMWIKAVK. Residues 189–191 lie on the Cytoplasmic side of the membrane; the sequence is TGS. A helical transmembrane segment spans residues 192-207; it reads IYWAAKCALAYFYMVS. Topologically, residues 208–210 are lumenal; the sequence is SWG. A helical membrane pass occupies residues 211-229; that stretch reads GYVFLINLIPLHVLVLMLT. The Cytoplasmic segment spans residues 230-234; sequence GRFSH. A helical transmembrane segment spans residues 235 to 253; that stretch reads RIYVAYCTVYCLGTILSMQ. Residues 254–265 are Lumenal-facing; sequence ISFVGFQPVLSS. The helical transmembrane segment at 266 to 283 threads the bilayer; that stretch reads EHMAAFGVFGLCQIHAFV. Residues 284 to 298 lie on the Cytoplasmic side of the membrane; sequence DYLRSKLNPQQFEVL. The helical transmembrane segment at 299–317 threads the bilayer; sequence FRSVISLVGFVLLTVGALL. The Lumenal segment spans residues 318 to 356; that stretch reads MLTGKISPWTGRFYSLLDPSYAKNNIPIIASVSEHQPTT. The short motif at 348-351 is the SVSE motif element; that stretch reads SVSE. Residues 357 to 379 traverse the membrane as a helical segment; that stretch reads WSSYYFDLQLLVFMFPVGLYYCF. Over 380-385 the chain is Cytoplasmic; the sequence is SNLSDA. Residues 386–402 traverse the membrane as a helical segment; the sequence is RIFIIMYGVTSMYFSAV. At 403–406 the chain is on the lumenal side; sequence MVRL. Arg-405 is a dolichyl diphosphooligosaccharide binding site. The helical transmembrane segment at 407 to 428 threads the bilayer; the sequence is MLVLAPVMCILSGIGVSQVLST. The Cytoplasmic segment spans residues 429–453; sequence YMKNLDISRPDKKSKKQQDSTYPIK. Residues 454 to 473 traverse the membrane as a helical segment; sequence NEVASGMILVMAFFLITYTF. Topologically, residues 474 to 705 are lumenal; that stretch reads HSTWVTSEAY…DLDNRGLSRT (232 aa). Residues 525–527 form an interacts with target acceptor peptide in protein substrate region; that stretch reads WWD. The WWDYG motif signature appears at 525 to 529; it reads WWDYG. A dolichyl diphosphooligosaccharide-binding site is contributed by Tyr-530. Asn-537 and Asn-544 each carry an N-linked (GlcNAc...) asparagine glycan. A glycan (N-linked (GlcNAc...) (high mannose) asparagine) is linked at Asn-548. The short motif at 592-599 is the DK motif element; it reads DINKFLWM.

The protein belongs to the STT3 family. Component of the oligosaccharyltransferase (OST) complex. There are 2 OST complexes, OST-A and OST-B, which contain STT3A or STT3B as catalytic subunit, respectively. OST-A and OST-B contain common core subunits RPN1, RPN2, OST48, OST4, DAD1 and TMEM258, and OST-A contains DC2/OSTC and KRTCAP2/KCP2 specific accessory subunits. OST-A complex assembly occurs through the formation of 3 subcomplexes. Subcomplex 1 contains RPN1 and TMEM258, subcomplex 2 contains the OST-A-specific subunits STT3A, DC2/OSTC, and KCP2 as well as the core subunit OST4, and subcomplex 3 contains RPN2, DAD1, and OST48. The OST-A complex can form stable complexes with the Sec61 complex or with both the Sec61 and TRAP complexes. Mg(2+) is required as a cofactor. Mn(2+) serves as cofactor.

It is found in the endoplasmic reticulum membrane. The enzyme catalyses a di-trans,poly-cis-dolichyl diphosphooligosaccharide + L-asparaginyl-[protein] = N(4)-(oligosaccharide-(1-&gt;4)-N-acetyl-beta-D-glucosaminyl-(1-&gt;4)-N-acetyl-beta-D-glucosaminyl)-L-asparaginyl-[protein] + a di-trans,poly-cis-dolichyl diphosphate + H(+). It functions in the pathway protein modification; protein glycosylation. Functionally, catalytic subunit of the oligosaccharyl transferase (OST) complex that catalyzes the initial transfer of a defined glycan (Glc(3)Man(9)GlcNAc(2) in eukaryotes) from the lipid carrier dolichol-pyrophosphate to an asparagine residue within an Asn-X-Ser/Thr consensus motif in nascent polypeptide chains, the first step in protein N-glycosylation. N-glycosylation occurs cotranslationally and the complex associates with the Sec61 complex at the channel-forming translocon complex that mediates protein translocation across the endoplasmic reticulum (ER). All subunits are required for a maximal enzyme activity. This subunit contains the active site and the acceptor peptide and donor lipid-linked oligosaccharide (LLO) binding pockets. STT3A is present in the majority of OST complexes and mediates cotranslational N-glycosylation of most sites on target proteins, while STT3B-containing complexes are required for efficient post-translational glycosylation and mediate glycosylation of sites that have been skipped by STT3A. STT3A-containing OST-A complex is also required to prevent hyperglycosylation of some target proteins by preventing glycosylation of facultative sites before folding of target proteins is completed. In Canis lupus familiaris (Dog), this protein is Dolichyl-diphosphooligosaccharide--protein glycosyltransferase subunit STT3A.